The primary structure comprises 121 residues: Small ribosomal subunit protein bS6 (121 aa).

The segment at Pro99–Ala121 is disordered. Over residues Glu110–Ala121 the composition is skewed to low complexity.

The protein belongs to the bacterial ribosomal protein bS6 family.

Binds together with bS18 to 16S ribosomal RNA. The chain is Small ribosomal subunit protein bS6 from Synechococcus sp. (strain CC9311).